Here is a 162-residue protein sequence, read N- to C-terminus: Flagellar assembly factor FliW (162 aa).

It belongs to the FliW family. As to quaternary structure, interacts with translational regulator CsrA and flagellin(s).

Its subcellular location is the cytoplasm. Functionally, acts as an anti-CsrA protein, binds CsrA and prevents it from repressing translation of its target genes, one of which is flagellin. Binds to flagellin and participates in the assembly of the flagellum. In Alkaliphilus metalliredigens (strain QYMF), this protein is Flagellar assembly factor FliW.